Here is a 499-residue protein sequence, read N- to C-terminus: Trichothecene C-4 hydroxylase (499 aa).

The chain crosses the membrane as a helical span at residues 7–29; that stretch reads VGVAVQLVLTVLLASIPLRVIWN. Residues Asn173 and Asn287 are each glycosylated (N-linked (GlcNAc...) asparagine). Cys442 is a heme binding site. N-linked (GlcNAc...) asparagine glycosylation occurs at Asn473.

The protein belongs to the cytochrome P450 family. The cofactor is heme.

It is found in the membrane. It functions in the pathway sesquiterpene biosynthesis; trichothecene biosynthesis. Trichothecene C-4 hydroxylase; part of the gene cluster that mediates the production of the antimicrobial trichothecene harzianum A (HA) that plays a role in Botrytis cinerea antagonistic activity and plant defense priming. The biosynthesis of harzianum A begins with the cyclization of farnesyl diphosphate to trichodiene and is catalyzed by the trichodiene synthase TRI5. Trichodiene undergoes a series of oxygenations catalyzed by the cytochrome P450 monooxygenase TRI4. TRI4 controls the addition of 3 oxygens at C-2, C-11, and the C-12, C-13-epoxide to form the intermediate isotrichodiol. Isotrichodiol then undergoes a non-enzymatic isomerization and cyclization to form 12,13-epoxytrichothec-9-ene (EPT) which is further converted to trichodermol by the cytochrome P450 monooxygenase TRI11 via C-4 hydroxylation. The last step of HA synthesis is esterification of an octatriendioyl moiety to the C-4 oxygen of trichodermol. The octatriendioyl moiety is probably produced by the polyketide synthase TRI17 and the esterification performed by the trichothecene O-acetyltransferase TRI3. In Trichoderma arundinaceum, this protein is Trichothecene C-4 hydroxylase.